We begin with the raw amino-acid sequence, 158 residues long: 2-C-methyl-D-erythritol 2,4-cyclodiphosphate synthase (158 aa).

Residues D9 and H11 each coordinate a divalent metal cation. 4-CDP-2-C-methyl-D-erythritol 2-phosphate is bound by residues 9-11 (DVH) and 35-36 (HS). Residue H43 participates in a divalent metal cation binding. 4-CDP-2-C-methyl-D-erythritol 2-phosphate contacts are provided by residues 57–59 (DIG), 62–66 (FPDTD), 133–136 (TTTE), F140, and R143.

The protein belongs to the IspF family. In terms of assembly, homotrimer. Requires a divalent metal cation as cofactor.

The enzyme catalyses 4-CDP-2-C-methyl-D-erythritol 2-phosphate = 2-C-methyl-D-erythritol 2,4-cyclic diphosphate + CMP. It participates in isoprenoid biosynthesis; isopentenyl diphosphate biosynthesis via DXP pathway; isopentenyl diphosphate from 1-deoxy-D-xylulose 5-phosphate: step 4/6. Functionally, involved in the biosynthesis of isopentenyl diphosphate (IPP) and dimethylallyl diphosphate (DMAPP), two major building blocks of isoprenoid compounds. Catalyzes the conversion of 4-diphosphocytidyl-2-C-methyl-D-erythritol 2-phosphate (CDP-ME2P) to 2-C-methyl-D-erythritol 2,4-cyclodiphosphate (ME-CPP) with a corresponding release of cytidine 5-monophosphate (CMP). This chain is 2-C-methyl-D-erythritol 2,4-cyclodiphosphate synthase, found in Haemophilus influenzae (strain PittEE).